The sequence spans 491 residues: Chromosomal replication initiator protein DnaA (491 aa).

The tract at residues 1–69 (MTTWDKCLKK…TIQECHGNDL (69 aa)) is domain I, interacts with DnaA modulators. Residues 69-154 (LIIEYSNKKF…KEDEEYSFGL (86 aa)) form a domain II region. A domain III, AAA+ region region spans residues 155 to 371 (PLKEKYVFDS…GALNRVLTTS (217 aa)). G199, G201, K202, and T203 together coordinate ATP. Residues 372–491 (KFNHKDPTIE…YELLLDKISR (120 aa)) are domain IV, binds dsDNA.

This sequence belongs to the DnaA family. Oligomerizes as a right-handed, spiral filament on DNA at oriC.

The protein resides in the cytoplasm. Its function is as follows. Plays an essential role in the initiation and regulation of chromosomal replication. ATP-DnaA binds to the origin of replication (oriC) to initiate formation of the DNA replication initiation complex once per cell cycle. Binds the DnaA box (a 9 base pair repeat at the origin) and separates the double-stranded (ds)DNA. Forms a right-handed helical filament on oriC DNA; dsDNA binds to the exterior of the filament while single-stranded (ss)DNA is stabiized in the filament's interior. The ATP-DnaA-oriC complex binds and stabilizes one strand of the AT-rich DNA unwinding element (DUE), permitting loading of DNA polymerase. After initiation quickly degrades to an ADP-DnaA complex that is not apt for DNA replication. Binds acidic phospholipids. In Francisella tularensis subsp. novicida (strain U112), this protein is Chromosomal replication initiator protein DnaA.